The chain runs to 376 residues: CYP enzymes assisting alcohol dehydrogenase (376 aa).

8 residues coordinate Zn(2+): cysteine 43, threonine 45, histidine 64, cysteine 94, cysteine 97, cysteine 100, cysteine 108, and cysteine 173. An NAD(+)-binding site is contributed by threonine 45. Residues threonine 45 and histidine 64 each contribute to the substrate site. NAD(+) contacts are provided by residues 199–204 (GLGAVG), aspartate 223, lysine 228, 294–296 (LGA), phenylalanine 320, and lysine 371.

Belongs to the zinc-containing alcohol dehydrogenase family. Class-III subfamily. In terms of assembly, homodimer. It depends on Zn(2+) as a cofactor.

It functions in the pathway alkaloid biosynthesis. Functionally, may be a positive catalyzer of strictosidine production by assisting secologanin biosynthesis, thus being involved in monoterpene indole alkaloids accumulation. This is CYP enzymes assisting alcohol dehydrogenase from Catharanthus roseus (Madagascar periwinkle).